We begin with the raw amino-acid sequence, 367 residues long: MWRGSSAGGSQGAAMEGTGGELGGQGNWGLEDAPGLLARASLPIMPAWPLPLASSALTLLLGALTSLFLWYCYRLGSQDMQALGTGSRAGAVGGRPGGCSEAGRPSPGRSGESGEGPRTEGLMSRRLRAYARRYSWAGMGRVRRAAQGGPSPGGGPGVLGIQRPGLLFLPDLPSAPFVPREAQRHDVELLESSFPAILRDFGAVSWDFSGTTPPPRGWSPPLAPGCYQLLLYQAGRCQPSNCRRCPGAYRALRGLRSFMSANTFGNAGFSVLLPGARLEGRCGPTNARVRCHLGLKIPPGCELVVGGEPQCWAEGHCLLVDDSFLYTVAHNGSPEDGPRVVFIVDLWHPNVAGAERQALDFVFAPDP.

Residues Met-1–Asn-27 form a disordered region. The Cytoplasmic segment spans residues Met-1–Pro-49. The chain crosses the membrane as a helical span at residues Leu-50 to Cys-72. Topologically, residues Tyr-73 to Pro-367 are lumenal. The disordered stretch occupies residues Arg-88–Leu-122. Position 106 is a phosphoserine (Ser-106).

Belongs to the aspartyl/asparaginyl beta-hydroxylase family.

The protein localises to the membrane. The polypeptide is Aspartate beta-hydroxylase domain-containing protein 1 (ASPHD1) (Bos taurus (Bovine)).